Reading from the N-terminus, the 78-residue chain is uncharacterized protein (78 aa).

Residues 58–78 (EANDPEKKIPSTAAKAISLSP) form a disordered region.

This is an uncharacterized protein from Vaccinia virus (strain Copenhagen) (VACV).